The following is a 316-amino-acid chain: Methionyl-tRNA formyltransferase (316 aa).

114 to 117 (SLLP) contacts (6S)-5,6,7,8-tetrahydrofolate.

It belongs to the Fmt family.

It catalyses the reaction L-methionyl-tRNA(fMet) + (6R)-10-formyltetrahydrofolate = N-formyl-L-methionyl-tRNA(fMet) + (6S)-5,6,7,8-tetrahydrofolate + H(+). Functionally, attaches a formyl group to the free amino group of methionyl-tRNA(fMet). The formyl group appears to play a dual role in the initiator identity of N-formylmethionyl-tRNA by promoting its recognition by IF2 and preventing the misappropriation of this tRNA by the elongation apparatus. In Aromatoleum aromaticum (strain DSM 19018 / LMG 30748 / EbN1) (Azoarcus sp. (strain EbN1)), this protein is Methionyl-tRNA formyltransferase.